A 217-amino-acid polypeptide reads, in one-letter code: Small ribosomal subunit protein uS3 (217 aa).

The KH type-2 domain maps to 38-106 (IRQLIQTKLA…QVHINIVEIK (69 aa)).

The protein belongs to the universal ribosomal protein uS3 family. Part of the 30S ribosomal subunit. Forms a tight complex with proteins S10 and S14.

Binds the lower part of the 30S subunit head. Binds mRNA in the 70S ribosome, positioning it for translation. In Lactococcus lactis subsp. lactis (strain IL1403) (Streptococcus lactis), this protein is Small ribosomal subunit protein uS3.